The primary structure comprises 155 residues: MAKGEGKVVAQNKKARHDYTIVDTLEAGMVLTGTEIKSVRAARINLKDGFAQVKNGEVWLSNVHIAPYEEGNIWNQEPERRRKLLLHKRQIQKLEQETKGTGMTLVPLKVYIKDGYAKLLLGLAKGKHDYDKRESIKRREQNRDIARVMKAVNQR.

This sequence belongs to the SmpB family.

It localises to the cytoplasm. Functionally, required for rescue of stalled ribosomes mediated by trans-translation. Binds to transfer-messenger RNA (tmRNA), required for stable association of tmRNA with ribosomes. tmRNA and SmpB together mimic tRNA shape, replacing the anticodon stem-loop with SmpB. tmRNA is encoded by the ssrA gene; the 2 termini fold to resemble tRNA(Ala) and it encodes a 'tag peptide', a short internal open reading frame. During trans-translation Ala-aminoacylated tmRNA acts like a tRNA, entering the A-site of stalled ribosomes, displacing the stalled mRNA. The ribosome then switches to translate the ORF on the tmRNA; the nascent peptide is terminated with the 'tag peptide' encoded by the tmRNA and targeted for degradation. The ribosome is freed to recommence translation, which seems to be the essential function of trans-translation. This is SsrA-binding protein from Streptococcus pneumoniae (strain P1031).